A 140-amino-acid chain; its full sequence is Biopolymer transport protein exbD1 (140 aa).

Over 1–16 the chain is Cytoplasmic; that stretch reads MAFSSGNSGGPMADIN. The chain crosses the membrane as a helical span at residues 17-37; it reads VTPLVDVMLVLLIIFIITAPL. At 38-140 the chain is on the periplasmic side; sequence MSHKVKVELP…GFVATKEKGQ (103 aa).

The protein belongs to the ExbD/TolR family. The accessory proteins ExbB and ExbD seem to form a complex with TonB.

The protein resides in the cell inner membrane. In terms of biological role, involved in the TonB-dependent energy-dependent transport of various receptor-bound substrates. This is Biopolymer transport protein exbD1 (exbD1) from Xanthomonas campestris pv. campestris (strain B100).